Consider the following 53-residue polypeptide: MREKYTKEEAVKNWEKKKNKPSSPKGVGEFLKKKKGRFYIIGKCITMLLCSHK.

Residues 1-16 (MREKYTKEEAVKNWEK) are compositionally biased toward basic and acidic residues. The interval 1–28 (MREKYTKEEAVKNWEKKKNKPSSPKGVG) is disordered. Residues 22 to 53 (SSPKGVGEFLKKKKGRFYIIGKCITMLLCSHK) are required for DVL/RTFL small polypeptide activity. Residues 30–46 (FLKKKKGRFYIIGKCIT) form a helical membrane-spanning segment.

This sequence belongs to the DVL/RTFL small polypeptides family.

The protein resides in the cell membrane. Functionally, small polypeptide acting as a regulatory molecule which coordinates cellular responses required for differentiation, growth and development, probably by restricting polar cell proliferation in lateral organs and coordinating socket cell recruitment and differentiation at trichome sites. This Arabidopsis thaliana (Mouse-ear cress) protein is Small polypeptide DEVIL 7.